The chain runs to 792 residues: Putative cellulose synthase-like protein H3 (792 aa).

2 consecutive transmembrane segments (helical) span residues 25–45 (AWML…VRRA) and 55–75 (VGGA…FVWL). Positions 132 to 154 (GRHVRDDGGPGARAAGGDGEQGA) are disordered. Positions 140 to 151 (GPGARAAGGDGE) are enriched in gly residues. Catalysis depends on residues Asp181 and Asp501. The next 6 helical transmembrane spans lie at 579–599 (VWAV…YCLL), 613–632 (FNIT…VEYM), 650–670 (IISA…TIGL), 706–726 (VFIP…IGTW), 739–759 (GPGI…LPFV), and 768–788 (YGIP…FLFC).

This sequence belongs to the glycosyltransferase 2 family. Plant cellulose synthase-like H subfamily.

It is found in the golgi apparatus membrane. In terms of biological role, thought to be a Golgi-localized beta-glycan synthase that polymerize the backbones of noncellulosic polysaccharides (hemicelluloses) of plant cell wall. The polypeptide is Putative cellulose synthase-like protein H3 (CSLH3) (Oryza sativa subsp. japonica (Rice)).